The chain runs to 633 residues: Extracellular metalloproteinase 3 (633 aa).

A signal peptide spans 1 to 18 (MHGLLLAGLLALPMNVLA). The propeptide occupies 19-246 (HPAEQHASNV…VHNVVDYVAS (228 aa)). N410 carries N-linked (GlcNAc...) asparagine glycosylation. H429 contributes to the Zn(2+) binding site. The active site involves E430. Residue H433 coordinates Zn(2+). Residues N480 and N622 are each glycosylated (N-linked (GlcNAc...) asparagine).

The protein belongs to the peptidase M36 family. Requires Zn(2+) as cofactor.

The protein localises to the secreted. In terms of biological role, secreted metalloproteinase probably acting as a virulence factor. This chain is Extracellular metalloproteinase 3 (MEP3), found in Arthroderma benhamiae (Trichophyton mentagrophytes).